Here is a 42-residue protein sequence, read N- to C-terminus: Beta-defensin 13 (42 aa).

Intrachain disulfides connect cysteine 9–cysteine 38, cysteine 16–cysteine 31, and cysteine 21–cysteine 39.

This sequence belongs to the beta-defensin family. As to expression, neutrophilic granules.

It is found in the secreted. In terms of biological role, has bactericidal activity. Active against E.coli ML35 and S.aureus 502A. The polypeptide is Beta-defensin 13 (DEFB13) (Bos taurus (Bovine)).